A 640-amino-acid chain; its full sequence is Serine/threonine-protein kinase WNG1 (640 aa).

The first 70 residues, 1–70, serve as a signal peptide directing secretion; sequence MPEQDLASGF…GVLCTVEAGA (70 aa). Disordered stretches follow at residues 100 to 222 and 237 to 280; these read PEVT…AQPT and SHPD…DASN. Residues 104–120 show a composition bias toward polar residues; sequence HASSEGSPQFESSLSQQ. The span at 124–141 shows a compositional bias: basic and acidic residues; the sequence is RPADRGEAHNGEEPRKDA. Residues 175–186 are compositionally biased toward low complexity; that stretch reads QRQASSAAESLA. Positions 248-279 are enriched in basic and acidic residues; that stretch reads FSKKQEGRRERRLAVRGDDSFARGHNRDRDAS. One can recognise a Protein kinase domain in the interval 291-593; it reads WAKIAALATG…LKQVMEDPYF (303 aa). Lys-395 serves as a coordination point for ATP. Residue Asp-486 is the Proton acceptor of the active site. Positions 609 to 640 are disordered; it reads PFRGDFSIDDPDAGGKMYIPPSKEQDHEQENE. The span at 631–640 shows a compositional bias: basic and acidic residues; the sequence is KEQDHEQENE.

Belongs to the protein kinase superfamily. STE Ser/Thr protein kinase family. WNG subfamily. Mg(2+) is required as a cofactor.

Its subcellular location is the cytoplasmic granule. It localises to the secreted. The protein resides in the parasitophorous vacuole lumen. It catalyses the reaction L-seryl-[protein] + ATP = O-phospho-L-seryl-[protein] + ADP + H(+). The enzyme catalyses L-threonyl-[protein] + ATP = O-phospho-L-threonyl-[protein] + ADP + H(+). Serine/threonine-protein kinase which, at the tachyzoite stage, phosphorylates several parasitophorous vacuole (PV)-resident proteins such as GRA2, GRA6 and GRA7. By phosphorylating GRA2 and GRA6, regulates the formation of a functional intravacuolar network (IVN); IVN is composed of membranous tubules that bud from the PV membrane into the vacuolar lumen. Plays a role in the establishement of chronic infection in the host by controlling cyst formation in the host tissues. This is Serine/threonine-protein kinase WNG1 from Toxoplasma gondii.